A 451-amino-acid chain; its full sequence is MPTFYLALHGGQTYHLIVDTDSVGNPSLSVIPSNPYQEQLSDTPLIPLTIFVGENTGVPPPPPPPPQRRDAWTQEPSPLDWDPLGYDVGHGPLASAMRMLWMANYIVRQSRGDRGLILPQGPQTAPQAMLVQPHVPPLRPTAPTILSPLSQPRLTPPQPLMMPPRPTPPTPLPPATLTVPPRPTRPTTLPPTPLLTVLQRPTELQPTPSPPRMHLPVLHVPDQSMHPLTHQSTPNDPDSPEPRSPTVFYNIPPMPLPPSQLPPPAAPAQPPPGVINDQQLHHLPSGPPWWPPICDPPQPSKTQGQSRGQSRGRGRGRGRGRGKSRDKQRKPGGPWRPEPNTSSPSMPELSPVLGLHQGQGAGDSPTPGPSNAAPVCRNSHTATPNVSPIHEPESHNSPEAPILFPDDWYPPSIDPADLDESWDYIFETTESPSSDEDYVEGPSKRPRPSIQ.

The tract at residues 1-176 (MPTFYLALHG…TPPTPLPPAT (176 aa)) is SMARCB1/INI1 binding. Disordered regions lie at residues 52-78 (VGENTGVPPPPPPPPQRRDAWTQEPSP) and 148-451 (PLSQ…PSIQ). Pro residues-rich tracts occupy residues 154 to 193 (LTPPQPLMMPPRPTPPTPLPPATLTVPPRPTRPTTLPPTP), 252 to 273 (PPMPLPPSQLPPPAAPAQPPPG), and 285 to 299 (SGPPWWPPICDPPQP). Positions 300–309 (SKTQGQSRGQ) are enriched in low complexity. Residues 310-330 (SRGRGRGRGRGRGKSRDKQRK) are compositionally biased toward basic residues. 7 tandem repeats follow at residues 311 to 312 (RG), 313 to 314 (RG), 315 to 316 (RG), 317 to 318 (RG), 319 to 320 (RG), 321 to 322 (RG), and 323 to 324 (KS). The interval 311 to 324 (RGRGRGRGRGRGKS) is 6.5 X 2 AA tandem repeats of R-G. 2 consecutive short sequence motifs (PXLXP motif, interaction with host ZMYND11) follow at residues 347–351 (PELSP) and 401–405 (PILFP).

The protein belongs to the herpesviridae EBNA2 family. In terms of assembly, interacts with human SMARCB1/INI1, presumably generating an open chromatin conformation at the EBNA2-responsive target genes. Interacts with human WAPL. Interacts with host CBF1; this interaction allows transcriptional activation by EBNA2. Interacts with host general transcription factors GTF2B, ERCC2 and ERCC3. Interacts (via PXLXP motif) with host ZMYND11/BS69 (via MYND-type zinc finger). Interacts with host EBF1. In terms of processing, phosphorylated.

Its subcellular location is the host nucleus matrix. In terms of biological role, plays a key role in the activation of the host resting B-cell and stimulation of B-cell proliferation. Acts by up-regulating the expression of viral EBNA1-6, LMP1, LMP2A and LMP2B genes, as well as several host genes including CD21, CD23 and MYC. Activates transcription by acting as an adapter molecule that binds to cellular sequence-specific DNA-binding proteins such as host CBF1, SMARCB1 and SPI1. Once EBNA2 is near promoter sites, its acidic activating domain recruits basal and activation-associated transcription factors TFIIB, TAF40, TFIIH components ERCC2 and ERCC3, and CBP in order to promote transcription. Alternatively, EBNA2 can affect activities of cell cycle regulators and retard cell cycle progression at G2/M phase. It also induces chromosomal instability, by disrupting mitotic checkpoints, multi-nucleation and formation of micronuclei in infected cells. This Epstein-Barr virus (strain GD1) (HHV-4) protein is Epstein-Barr nuclear antigen 2 (EBNA2).